The following is a 206-amino-acid chain: Ribosome maturation factor RimM (206 aa).

In terms of domain architecture, PRC barrel spans 113–206; sequence DDEYYWVDLI…RIDSNWPTEL (94 aa).

Belongs to the RimM family. In terms of assembly, binds ribosomal protein uS19.

It is found in the cytoplasm. Its function is as follows. An accessory protein needed during the final step in the assembly of 30S ribosomal subunit, possibly for assembly of the head region. Essential for efficient processing of 16S rRNA. May be needed both before and after RbfA during the maturation of 16S rRNA. It has affinity for free ribosomal 30S subunits but not for 70S ribosomes. The polypeptide is Ribosome maturation factor RimM (Bordetella petrii (strain ATCC BAA-461 / DSM 12804 / CCUG 43448)).